The sequence spans 413 residues: Pyruvate dehydrogenase complex subunit homolog DDB_G0271564, mitochondrial (413 aa).

A mitochondrion-targeting transit peptide spans 1 to 19 (MNRILKQVSNTKGKGIRFY). The region spanning 29-67 (YMFPSVRRLLVEYGINSSKEVTATGPQNRLLKGDVLAYI) is the Peripheral subunit-binding (PSBD) domain.

This sequence belongs to the 2-oxoacid dehydrogenase family.

Its subcellular location is the mitochondrion. Its function is as follows. The pyruvate dehydrogenase complex catalyzes the overall conversion of pyruvate to acetyl-CoA and CO(2). It contains multiple copies of three enzymatic components: pyruvate dehydrogenase (E1), dihydrolipoamide acetyltransferase (E2) and lipoamide dehydrogenase (E3). The polypeptide is Pyruvate dehydrogenase complex subunit homolog DDB_G0271564, mitochondrial (pdhX) (Dictyostelium discoideum (Social amoeba)).